A 452-amino-acid chain; its full sequence is Bifunctional protein GlmU (452 aa).

The segment at methionine 1–arginine 226 is pyrophosphorylase. UDP-N-acetyl-alpha-D-glucosamine-binding positions include leucine 7–glycine 10, lysine 21, glutamine 73, and glycine 78–threonine 79. Aspartate 103 lines the Mg(2+) pocket. UDP-N-acetyl-alpha-D-glucosamine is bound by residues glycine 140, glutamate 155, asparagine 170, and asparagine 224. Asparagine 224 is a Mg(2+) binding site. A linker region spans residues leucine 227 to alanine 247. The segment at glycine 248–glutamine 452 is N-acetyltransferase. UDP-N-acetyl-alpha-D-glucosamine contacts are provided by arginine 329 and lysine 347. The Proton acceptor role is filled by histidine 359. Tyrosine 362 and asparagine 373 together coordinate UDP-N-acetyl-alpha-D-glucosamine. Residues alanine 376, asparagine 382–tyrosine 383, alanine 419, and arginine 436 contribute to the acetyl-CoA site.

In the N-terminal section; belongs to the N-acetylglucosamine-1-phosphate uridyltransferase family. The protein in the C-terminal section; belongs to the transferase hexapeptide repeat family. Homotrimer. Requires Mg(2+) as cofactor.

The protein localises to the cytoplasm. It catalyses the reaction alpha-D-glucosamine 1-phosphate + acetyl-CoA = N-acetyl-alpha-D-glucosamine 1-phosphate + CoA + H(+). The enzyme catalyses N-acetyl-alpha-D-glucosamine 1-phosphate + UTP + H(+) = UDP-N-acetyl-alpha-D-glucosamine + diphosphate. It participates in nucleotide-sugar biosynthesis; UDP-N-acetyl-alpha-D-glucosamine biosynthesis; N-acetyl-alpha-D-glucosamine 1-phosphate from alpha-D-glucosamine 6-phosphate (route II): step 2/2. Its pathway is nucleotide-sugar biosynthesis; UDP-N-acetyl-alpha-D-glucosamine biosynthesis; UDP-N-acetyl-alpha-D-glucosamine from N-acetyl-alpha-D-glucosamine 1-phosphate: step 1/1. It functions in the pathway bacterial outer membrane biogenesis; LPS lipid A biosynthesis. In terms of biological role, catalyzes the last two sequential reactions in the de novo biosynthetic pathway for UDP-N-acetylglucosamine (UDP-GlcNAc). The C-terminal domain catalyzes the transfer of acetyl group from acetyl coenzyme A to glucosamine-1-phosphate (GlcN-1-P) to produce N-acetylglucosamine-1-phosphate (GlcNAc-1-P), which is converted into UDP-GlcNAc by the transfer of uridine 5-monophosphate (from uridine 5-triphosphate), a reaction catalyzed by the N-terminal domain. This is Bifunctional protein GlmU from Synechococcus sp. (strain ATCC 27144 / PCC 6301 / SAUG 1402/1) (Anacystis nidulans).